Consider the following 493-residue polypeptide: 3-octaprenyl-4-hydroxybenzoate carboxy-lyase (493 aa).

Position 172 (asparagine 172) interacts with Mn(2+). Prenylated FMN contacts are provided by residues 175–177 (IYR), 189–191 (RWL), and 194–195 (RG). Glutamate 238 serves as a coordination point for Mn(2+). The active-site Proton donor is the aspartate 287.

The protein belongs to the UbiD family. Homohexamer. Prenylated FMN is required as a cofactor. Mn(2+) serves as cofactor.

It is found in the cell membrane. The enzyme catalyses a 4-hydroxy-3-(all-trans-polyprenyl)benzoate + H(+) = a 2-(all-trans-polyprenyl)phenol + CO2. The protein operates within cofactor biosynthesis; ubiquinone biosynthesis. Its function is as follows. Catalyzes the decarboxylation of 3-octaprenyl-4-hydroxy benzoate to 2-octaprenylphenol, an intermediate step in ubiquinone biosynthesis. This is 3-octaprenyl-4-hydroxybenzoate carboxy-lyase from Shewanella sp. (strain MR-4).